Reading from the N-terminus, the 508-residue chain is Light-independent protochlorophyllide reductase subunit B (508 aa).

Residue Asp36 participates in [4Fe-4S] cluster binding. Asp294 acts as the Proton donor in catalysis. 429 to 430 (GM) lines the substrate pocket.

This sequence belongs to the ChlB/BchB/BchZ family. Protochlorophyllide reductase is composed of three subunits; ChlL, ChlN and ChlB. Forms a heterotetramer of two ChlB and two ChlN subunits. [4Fe-4S] cluster serves as cofactor.

It catalyses the reaction chlorophyllide a + oxidized 2[4Fe-4S]-[ferredoxin] + 2 ADP + 2 phosphate = protochlorophyllide a + reduced 2[4Fe-4S]-[ferredoxin] + 2 ATP + 2 H2O. It participates in porphyrin-containing compound metabolism; chlorophyll biosynthesis (light-independent). In terms of biological role, component of the dark-operative protochlorophyllide reductase (DPOR) that uses Mg-ATP and reduced ferredoxin to reduce ring D of protochlorophyllide (Pchlide) to form chlorophyllide a (Chlide). This reaction is light-independent. The NB-protein (ChlN-ChlB) is the catalytic component of the complex. This is Light-independent protochlorophyllide reductase subunit B from Trichormus variabilis (strain ATCC 29413 / PCC 7937) (Anabaena variabilis).